The following is a 97-amino-acid chain: Defensin alpha 4 (97 aa).

Residues 1 to 19 (MRIIAILAAILLVALQVRA) form the signal peptide. Positions 20–63 (GPLQARGDEAPGQEQRGPEDQDISISFAWDKSSALQVSGSTRGM) are excised as a propeptide. 3 cysteine pairs are disulfide-bonded: Cys-65/Cys-93, Cys-67/Cys-82, and Cys-72/Cys-92. A propeptide is located at residue Asp-97.

The protein belongs to the alpha-defensin family. As to quaternary structure, homodimer; homodimerization seems to be required for killing S.aureus, but not E.coli. Interacts with CD4. Interacts with Bacillus anthracis lef; homodimerization is required for the interaction. In terms of processing, the three-dimensional structure formed by the three intramolecular disulfide bridges is indispensable for effective bacterial killing.

Its subcellular location is the secreted. It is found in the cytoplasmic vesicle. It localises to the secretory vesicle. Host-defense peptide that has antimicrobial activity against Gram-negative bacteria, and to a lesser extent also against Gram-positive bacteria and fungi. Exhibits antimicrobial activity against Gram-negative E.coli and E.aerogenes and Gram-positive S.faecalis, S.aureus and B.cereus and the yeast C.albicans (in vitro). Inhibits corticotropin (ACTH)-stimulated corticosterone production (in vitro). Inhibits enzymatic activity of B.anthracis lef/anthrax lethal factor (in vitro). In Pan troglodytes (Chimpanzee), this protein is Defensin alpha 4 (DEFA4).